Consider the following 253-residue polypeptide: Ribosome maturation factor RimP (253 aa).

Residues 186 to 199 (RRGKAAEREKKRDL) are compositionally biased toward basic and acidic residues. The interval 186-253 (RRGKAAEREK…RARRGEIDPD (68 aa)) is disordered. Low complexity predominate over residues 201–216 (LAPPLAPHAKPAAQAK). Positions 240–253 (LAADRARRGEIDPD) are enriched in basic and acidic residues.

It belongs to the RimP family.

It localises to the cytoplasm. Its function is as follows. Required for maturation of 30S ribosomal subunits. The polypeptide is Ribosome maturation factor RimP (Bradyrhizobium sp. (strain BTAi1 / ATCC BAA-1182)).